Consider the following 636-residue polypeptide: Chaperone protein DnaK2 (636 aa).

A Phosphothreonine; by autocatalysis modification is found at Thr-198. Positions 604–618 (EAGVGAPGAGPEAGT) are enriched in low complexity. The disordered stretch occupies residues 604–636 (EAGVGAPGAGPEAGTSSGGGDDVIDAEFSEPEK). Over residues 625 to 636 (DVIDAEFSEPEK) the composition is skewed to acidic residues.

This sequence belongs to the heat shock protein 70 family.

Acts as a chaperone. This is Chaperone protein DnaK2 (dnaK2) from Synechocystis sp. (strain ATCC 27184 / PCC 6803 / Kazusa).